The following is a 114-amino-acid chain: Probable non-functional T cell receptor beta variable 5-3 (114 aa).

The first 21 residues, 1-21 (MGPGLLCWELLYLLGAGPVEA), serve as a signal peptide directing secretion. Residues 22–114 (GVTQSPTHLI…SALYLCARSL (93 aa)) enclose the Ig-like domain. A disulfide bridge connects residues Cys42 and Cys110. Residue Asn96 is glycosylated (N-linked (GlcNAc...) asparagine).

Alpha-beta TR is a heterodimer composed of an alpha and beta chain; disulfide-linked. The alpha-beta TR is associated with the transmembrane signaling CD3 coreceptor proteins to form the TR-CD3 (TcR or TCR). The assembly of alpha-beta TR heterodimers with CD3 occurs in the endoplasmic reticulum where a single alpha-beta TR heterodimer associates with one CD3D-CD3E heterodimer, one CD3G-CD3E heterodimer and one CD247 homodimer forming a stable octameric structure. CD3D-CD3E and CD3G-CD3E heterodimers preferentially associate with TR alpha and TR beta chains, respectively. The association of the CD247 homodimer is the last step of TcR assembly in the endoplasmic reticulum and is required for transport to the cell surface.

The protein resides in the cell membrane. Functionally, probable non-functional open reading frame (ORF) of V region of the variable domain of T cell receptor (TR) beta chain. Non-functional ORF generally cannot participate in the synthesis of a productive T cell receptor (TR) chain due to altered V-(D)-J or switch recombination and/or splicing site (at mRNA level) and/or conserved amino acid change (protein level). Alpha-beta T cell receptors are antigen specific receptors which are essential to the immune response and are present on the cell surface of T lymphocytes. Recognize peptide-major histocompatibility (MH) (pMH) complexes that are displayed by antigen presenting cells (APC), a prerequisite for efficient T cell adaptive immunity against pathogens. Binding of alpha-beta TR to pMH complex initiates TR-CD3 clustering on the cell surface and intracellular activation of LCK that phosphorylates the ITAM motifs of CD3G, CD3D, CD3E and CD247 enabling the recruitment of ZAP70. In turn ZAP70 phosphorylates LAT, which recruits numerous signaling molecules to form the LAT signalosome. The LAT signalosome propagates signal branching to three major signaling pathways, the calcium, the mitogen-activated protein kinase (MAPK) kinase and the nuclear factor NF-kappa-B (NF-kB) pathways, leading to the mobilization of transcription factors that are critical for gene expression and essential for T cell growth and differentiation. The T cell repertoire is generated in the thymus, by V-(D)-J rearrangement. This repertoire is then shaped by intrathymic selection events to generate a peripheral T cell pool of self-MH restricted, non-autoaggressive T cells. Post-thymic interaction of alpha-beta TR with the pMH complexes shapes TR structural and functional avidity. The sequence is that of Probable non-functional T cell receptor beta variable 5-3 from Homo sapiens (Human).